Reading from the N-terminus, the 187-residue chain is Elongation factor P (187 aa).

The protein belongs to the elongation factor P family.

The protein resides in the cytoplasm. Its pathway is protein biosynthesis; polypeptide chain elongation. Its function is as follows. Involved in peptide bond synthesis. Stimulates efficient translation and peptide-bond synthesis on native or reconstituted 70S ribosomes in vitro. Probably functions indirectly by altering the affinity of the ribosome for aminoacyl-tRNA, thus increasing their reactivity as acceptors for peptidyl transferase. This Treponema denticola (strain ATCC 35405 / DSM 14222 / CIP 103919 / JCM 8153 / KCTC 15104) protein is Elongation factor P.